The sequence spans 311 residues: Mitochondrial arginine transporter BAC1 (311 aa).

Solcar repeat units follow at residues 12–101 (FGFY…AKLF), 111–203 (PRPE…LRYH), and 219–305 (VDMG…SMKM). 6 helical membrane-spanning segments follow: residues 18-38 (YVAG…FDTV), 76-96 (GATS…GIYS), 113-133 (PEII…VLCP), 178-197 (GGSA…FTVY), 222-242 (GIGV…VLPF), and 288-308 (AFPA…MLGI).

The protein belongs to the mitochondrial carrier (TC 2.A.29) family. High expression in flowers and siliques. Lower expression in leaves and stems.

It is found in the mitochondrion inner membrane. Its activity is regulated as follows. Inhibited by mercuric chloride. Functionally, mitochondrial arginine transporter that catalyzes the counter-exchange of arginine with lysine, ornithine, arginine and histidine. Substrate preference in reconstituted proteoliposomes is arginine &gt; lysine &gt; ornithine &gt; histidine. May be involved in the delivery of arginine, released from seed reserves, to mitochondrial arginase and the export of ornithine. The polypeptide is Mitochondrial arginine transporter BAC1 (BAC1) (Arabidopsis thaliana (Mouse-ear cress)).